The following is a 310-amino-acid chain: Tagatose-6-phosphate kinase (310 aa).

It belongs to the carbohydrate kinase PfkB family. LacC subfamily.

The catalysed reaction is D-tagatofuranose 6-phosphate + ATP = D-tagatofuranose 1,6-bisphosphate + ADP + H(+). The protein operates within carbohydrate metabolism; D-tagatose 6-phosphate degradation; D-glyceraldehyde 3-phosphate and glycerone phosphate from D-tagatose 6-phosphate: step 1/2. In Staphylococcus aureus (strain bovine RF122 / ET3-1), this protein is Tagatose-6-phosphate kinase.